Reading from the N-terminus, the 229-residue chain is 2-C-methyl-D-erythritol 4-phosphate cytidylyltransferase (229 aa).

This sequence belongs to the IspD/TarI cytidylyltransferase family. IspD subfamily.

It catalyses the reaction 2-C-methyl-D-erythritol 4-phosphate + CTP + H(+) = 4-CDP-2-C-methyl-D-erythritol + diphosphate. The protein operates within isoprenoid biosynthesis; isopentenyl diphosphate biosynthesis via DXP pathway; isopentenyl diphosphate from 1-deoxy-D-xylulose 5-phosphate: step 2/6. Its function is as follows. Catalyzes the formation of 4-diphosphocytidyl-2-C-methyl-D-erythritol from CTP and 2-C-methyl-D-erythritol 4-phosphate (MEP). The chain is 2-C-methyl-D-erythritol 4-phosphate cytidylyltransferase from Neisseria gonorrhoeae (strain NCCP11945).